A 778-amino-acid chain; its full sequence is Ubiquitin thioesterase trabid (778 aa).

RanBP2-type zinc fingers lie at residues 5 to 36 and 89 to 118; these read KDDA…SKPL and DSEK…KRGG. The span at 187–197 shows a compositional bias: polar residues; that stretch reads ASHNQSQSQHR. Positions 187-226 are disordered; it reads ASHNQSQSQHRQPVLQQQMQLQLQPQQQRESSSSAAVPPQ. Residues 198–226 show a composition bias toward low complexity; that stretch reads QPVLQQQMQLQLQPQQQRESSSSAAVPPQ. Residues 232–261 form a RanBP2-type 3 zinc finger; sequence YVSKWACNSCTYENWPRSIKCSMCGKTRER. A disordered region spans residues 265–290; it reads GSQNDLHASSSLNSQEENQQQLQQPN. Residues 273-288 are compositionally biased toward low complexity; the sequence is SSSLNSQEENQQQLQQ. An OTU domain is found at 507–665; that stretch reads MFVLWNRSAG…RGHFSALVPM (159 aa). The active-site Nucleophile is the cysteine 518. The active-site Proton acceptor is the histidine 658. A phosphoserine mark is found at serine 770, serine 771, and serine 775.

The protein belongs to the peptidase C64 family. As to quaternary structure, interacts with Apc.

It carries out the reaction Thiol-dependent hydrolysis of ester, thioester, amide, peptide and isopeptide bonds formed by the C-terminal Gly of ubiquitin (a 76-residue protein attached to proteins as an intracellular targeting signal).. Functionally, positive regulator of the Wnt signaling pathway. Specifically cleaves 'Lys-63'-linked ubiquitin chains. May act by deubiquitinating APC protein, a negative regulator of Wnt-mediated transcription. Required for an efficient wg response, but not for other signaling responses, in the eye. In Drosophila melanogaster (Fruit fly), this protein is Ubiquitin thioesterase trabid (trbd).